The primary structure comprises 456 residues: Ribulose bisphosphate carboxylase large chain (456 aa).

Lys7 carries the post-translational modification N6,N6,N6-trimethyllysine. Residues Asn116 and Thr166 each coordinate substrate. Lys168 serves as the catalytic Proton acceptor. Residue Lys170 coordinates substrate. Residues Lys194, Asp196, and Glu197 each contribute to the Mg(2+) site. The residue at position 194 (Lys194) is an N6-carboxylysine. The active-site Proton acceptor is His287. Substrate-binding residues include Arg288, His320, and Ser372.

Belongs to the RuBisCO large chain family. Type I subfamily. As to quaternary structure, heterohexadecamer of 8 large chains and 8 small chains; disulfide-linked. The disulfide link is formed within the large subunit homodimers. The cofactor is Mg(2+). Post-translationally, the disulfide bond which can form in the large chain dimeric partners within the hexadecamer appears to be associated with oxidative stress and protein turnover.

Its subcellular location is the plastid. It is found in the chloroplast. It carries out the reaction 2 (2R)-3-phosphoglycerate + 2 H(+) = D-ribulose 1,5-bisphosphate + CO2 + H2O. It catalyses the reaction D-ribulose 1,5-bisphosphate + O2 = 2-phosphoglycolate + (2R)-3-phosphoglycerate + 2 H(+). In terms of biological role, ruBisCO catalyzes two reactions: the carboxylation of D-ribulose 1,5-bisphosphate, the primary event in carbon dioxide fixation, as well as the oxidative fragmentation of the pentose substrate in the photorespiration process. Both reactions occur simultaneously and in competition at the same active site. This is Ribulose bisphosphate carboxylase large chain from Barnardia japonica (Chinese squill).